We begin with the raw amino-acid sequence, 637 residues long: Serine/threonine-protein kinase Nek11 (637 aa).

The Protein kinase domain occupies 29 to 287; that stretch reads YVLQQKLGSG…AIEILKIPYI (259 aa). ATP-binding positions include 35–43 and Lys61; that span reads LGSGSFGTV. Asp158 serves as the catalytic Proton acceptor. Phosphoserine; by CHEK1 is present on Ser273. Residues 302–385 are a coiled coil; sequence TLEDKNLDCQ…QELRSRNFQQ (84 aa). The disordered stretch occupies residues 399–446; that stretch reads GMEEKEEQPEGRPSCSPQDEDEERWQDREEEFDEPTLENLSEPQPIPS. The span at 416 to 434 shows a compositional bias: acidic residues; it reads QDEDEERWQDREEEFDEPT.

Belongs to the protein kinase superfamily. NEK Ser/Thr protein kinase family. NIMA subfamily. As to quaternary structure, interacts with NEK2. Mn(2+) serves as cofactor. The cofactor is Mg(2+). Post-translationally, phosphorylated by NEK2. Phosphorylation at Ser-273 is important for its activation.

The protein localises to the nucleus. The protein resides in the nucleolus. The enzyme catalyses L-seryl-[protein] + ATP = O-phospho-L-seryl-[protein] + ADP + H(+). It catalyses the reaction L-threonyl-[protein] + ATP = O-phospho-L-threonyl-[protein] + ADP + H(+). With respect to regulation, autorepressed by intramolecular binding of the C-terminus which dissociates following phosphorylation by NEK2. Activated in response to DNA damage. Inhibited by zinc. Functionally, protein kinase which plays an important role in the G2/M checkpoint response to DNA damage. Controls degradation of CDC25A by directly phosphorylating it on residues whose phosphorylation is required for BTRC-mediated polyubiquitination and degradation. This chain is Serine/threonine-protein kinase Nek11 (NEK11), found in Macaca fascicularis (Crab-eating macaque).